The chain runs to 465 residues: GDNF family receptor alpha-1 (465 aa).

Positions 1–24 are cleaved as a signal peptide; the sequence is MFLATLYFALPLLDLLLSAEVSGG. 3 tandem repeats follow at residues 25–113, 150–238, and 239–342. A disulfide bridge connects residues C36 and C42. N-linked (GlcNAc...) asparagine glycosylation is present at N59. 10 disulfide bridges follow: C154–C214, C161–C167, C178–C192, C187–C233, C216–C221, C243–C313, C250–C256, C267–C285, C277–C337, and C315–C325. N-linked (GlcNAc...) asparagine glycosylation is found at N347 and N406. S429 carries the GPI-anchor amidated serine lipid modification. A propeptide spans 430 to 465 (removed in mature form); the sequence is HITTKSMAAPPSCGLSPLLVLVVTALSTLLSLTETS.

This sequence belongs to the GDNFR family. In terms of assembly, interacts with GDNF ligand and RET: forms a 2:2:2 ternary complex composed of GDNF ligand, GFRA1 and RET receptor. Interacts with SORL1, either alone or in complex with GDNF. Interaction between SORL1 and GFRA1 leads to GFRA1 internalization, but not degradation.

It localises to the cell membrane. It is found in the golgi apparatus. Its subcellular location is the trans-Golgi network. The protein resides in the endosome. The protein localises to the multivesicular body. Functionally, coreceptor for GDNF, a neurotrophic factor that enhances survival and morphological differentiation of dopaminergic neurons and increases their high-affinity dopamine uptake. GDNF-binding leads to autophosphorylation and activation of the RET receptor. This Homo sapiens (Human) protein is GDNF family receptor alpha-1 (GFRA1).